We begin with the raw amino-acid sequence, 400 residues long: Elongation factor Tu (400 aa).

A tr-type G domain is found at 10-210 (KPHCNVGTIG…VDTYIPIPPR (201 aa)). The G1 stretch occupies residues 19 to 26 (GHVDHGKT). Residue 19–26 (GHVDHGKT) coordinates GTP. Thr26 provides a ligand contact to Mg(2+). The interval 60–64 (GLTIA) is G2. A G3 region spans residues 81 to 84 (DCPG). GTP contacts are provided by residues 81–85 (DCPGH) and 136–139 (NKCD). Positions 136-139 (NKCD) are G4. Residues 174–176 (SAI) are G5.

Belongs to the TRAFAC class translation factor GTPase superfamily. Classic translation factor GTPase family. EF-Tu/EF-1A subfamily. In terms of assembly, monomer.

The protein localises to the cytoplasm. The catalysed reaction is GTP + H2O = GDP + phosphate + H(+). In terms of biological role, GTP hydrolase that promotes the GTP-dependent binding of aminoacyl-tRNA to the A-site of ribosomes during protein biosynthesis. In Dehalococcoides mccartyi (strain CBDB1), this protein is Elongation factor Tu.